The sequence spans 312 residues: 4-hydroxy-3-methylbut-2-enyl diphosphate reductase (312 aa).

C15 contributes to the [4Fe-4S] cluster binding site. 2 residues coordinate (2E)-4-hydroxy-3-methylbut-2-enyl diphosphate: H44 and H77. 2 residues coordinate dimethylallyl diphosphate: H44 and H77. H44 and H77 together coordinate isopentenyl diphosphate. C99 serves as a coordination point for [4Fe-4S] cluster. H127 provides a ligand contact to (2E)-4-hydroxy-3-methylbut-2-enyl diphosphate. Dimethylallyl diphosphate is bound at residue H127. H127 provides a ligand contact to isopentenyl diphosphate. E129 serves as the catalytic Proton donor. (2E)-4-hydroxy-3-methylbut-2-enyl diphosphate is bound at residue T167. Residue C197 participates in [4Fe-4S] cluster binding. S225, S226, N227, and S269 together coordinate (2E)-4-hydroxy-3-methylbut-2-enyl diphosphate. Residues S225, S226, N227, and S269 each contribute to the dimethylallyl diphosphate site. Isopentenyl diphosphate is bound by residues S225, S226, N227, and S269.

It belongs to the IspH family. It depends on [4Fe-4S] cluster as a cofactor.

It catalyses the reaction isopentenyl diphosphate + 2 oxidized [2Fe-2S]-[ferredoxin] + H2O = (2E)-4-hydroxy-3-methylbut-2-enyl diphosphate + 2 reduced [2Fe-2S]-[ferredoxin] + 2 H(+). It carries out the reaction dimethylallyl diphosphate + 2 oxidized [2Fe-2S]-[ferredoxin] + H2O = (2E)-4-hydroxy-3-methylbut-2-enyl diphosphate + 2 reduced [2Fe-2S]-[ferredoxin] + 2 H(+). Its pathway is isoprenoid biosynthesis; dimethylallyl diphosphate biosynthesis; dimethylallyl diphosphate from (2E)-4-hydroxy-3-methylbutenyl diphosphate: step 1/1. The protein operates within isoprenoid biosynthesis; isopentenyl diphosphate biosynthesis via DXP pathway; isopentenyl diphosphate from 1-deoxy-D-xylulose 5-phosphate: step 6/6. Its function is as follows. Catalyzes the conversion of 1-hydroxy-2-methyl-2-(E)-butenyl 4-diphosphate (HMBPP) into a mixture of isopentenyl diphosphate (IPP) and dimethylallyl diphosphate (DMAPP). Acts in the terminal step of the DOXP/MEP pathway for isoprenoid precursor biosynthesis. The polypeptide is 4-hydroxy-3-methylbut-2-enyl diphosphate reductase (Azoarcus sp. (strain BH72)).